Here is a 131-residue protein sequence, read N- to C-terminus: Small ribosomal subunit protein uS8 (131 aa).

The protein belongs to the universal ribosomal protein uS8 family. In terms of assembly, part of the 30S ribosomal subunit. Contacts proteins S5 and S12.

Its function is as follows. One of the primary rRNA binding proteins, it binds directly to 16S rRNA central domain where it helps coordinate assembly of the platform of the 30S subunit. The chain is Small ribosomal subunit protein uS8 from Prosthecochloris aestuarii (strain DSM 271 / SK 413).